A 324-amino-acid chain; its full sequence is Glyoxylate/hydroxypyruvate reductase B (324 aa).

Active-site residues include arginine 237 and glutamate 266. The Proton donor role is filled by histidine 285.

Belongs to the D-isomer specific 2-hydroxyacid dehydrogenase family. GhrB subfamily. In terms of assembly, homodimer.

It is found in the cytoplasm. The enzyme catalyses glycolate + NADP(+) = glyoxylate + NADPH + H(+). The catalysed reaction is (R)-glycerate + NAD(+) = 3-hydroxypyruvate + NADH + H(+). It catalyses the reaction (R)-glycerate + NADP(+) = 3-hydroxypyruvate + NADPH + H(+). Functionally, catalyzes the NADPH-dependent reduction of glyoxylate and hydroxypyruvate into glycolate and glycerate, respectively. The chain is Glyoxylate/hydroxypyruvate reductase B from Citrobacter koseri (strain ATCC BAA-895 / CDC 4225-83 / SGSC4696).